Here is a 297-residue protein sequence, read N- to C-terminus: uncharacterized protein (297 aa).

A signal peptide spans 1 to 24 (MRAINKFLITVCIALLASVAVALG). 15 residues coordinate heme: cysteine 58, cysteine 61, histidine 62, cysteine 141, cysteine 144, histidine 145, cysteine 167, cysteine 170, histidine 171, cysteine 223, cysteine 226, histidine 227, cysteine 264, cysteine 267, and histidine 268. The segment at 277–297 (TNSVDTWSREGEGAEVQQLPH) is disordered.

Binds 5 heme groups per subunit.

This is an uncharacterized protein from Archaeoglobus fulgidus (strain ATCC 49558 / DSM 4304 / JCM 9628 / NBRC 100126 / VC-16).